The primary structure comprises 749 residues: Chitin synthase G (749 aa).

The next 5 helical transmembrane spans lie at 40–60 (CVGE…PLPP), 73–93 (VLQW…WLFC), 421–441 (FMQN…ISII), 451–471 (PVGF…YFGI), and 483–503 (LMFI…IFTA). A disordered region spans residues 683 to 749 (IESGSGIPSG…RRYMQPEQMV (67 aa)). A compositionally biased stretch (polar residues) spans 697-718 (LSSSVPQSGMQQSRAVPGNMSQ). Asn715 carries N-linked (GlcNAc...) asparagine glycosylation. The span at 728 to 742 (YTKRPSRIPRQKRRY) shows a compositional bias: basic residues.

Belongs to the chitin synthase family. Class VI subfamily.

Its subcellular location is the cell membrane. The catalysed reaction is [(1-&gt;4)-N-acetyl-beta-D-glucosaminyl](n) + UDP-N-acetyl-alpha-D-glucosamine = [(1-&gt;4)-N-acetyl-beta-D-glucosaminyl](n+1) + UDP + H(+). Polymerizes chitin, a structural polymer of the cell wall and septum, by transferring the sugar moiety of UDP-GlcNAc to the non-reducing end of the growing chitin polymer. Plays an important role in septal growth or maintenance. Mediates colony spore formation. This is Chitin synthase G from Aspergillus niger (strain ATCC MYA-4892 / CBS 513.88 / FGSC A1513).